The chain runs to 353 residues: Phospho-N-acetylmuramoyl-pentapeptide-transferase (353 aa).

A run of 10 helical transmembrane segments spans residues 22-42 (FAFFIALCLSLFLMPKFITWA), 65-85 (TPTMGGLIFISSAVIASLFCI), 88-108 (DNIFAISALLCLILFCLIGLI), 129-149 (LLAQIIAGLICILPLYFSSEL), 161-181 (PLFDMEIFAIVFWILVLISSS), 192-212 (GLATVPSIFSLSTLGIFLYLS), 228-248 (GLGEVVIICAALIGALMGFLW), 256-276 (VFMGDSGSLALGGFIGFLAII), 281-301 (ILLLLIGFVFVLETVSVILQV), and 330-350 (KIIVRFWMIALLSNLLALASI).

The protein belongs to the glycosyltransferase 4 family. MraY subfamily. It depends on Mg(2+) as a cofactor.

The protein resides in the cell inner membrane. It catalyses the reaction UDP-N-acetyl-alpha-D-muramoyl-L-alanyl-gamma-D-glutamyl-meso-2,6-diaminopimeloyl-D-alanyl-D-alanine + di-trans,octa-cis-undecaprenyl phosphate = di-trans,octa-cis-undecaprenyl diphospho-N-acetyl-alpha-D-muramoyl-L-alanyl-D-glutamyl-meso-2,6-diaminopimeloyl-D-alanyl-D-alanine + UMP. Its pathway is cell wall biogenesis; peptidoglycan biosynthesis. Functionally, catalyzes the initial step of the lipid cycle reactions in the biosynthesis of the cell wall peptidoglycan: transfers peptidoglycan precursor phospho-MurNAc-pentapeptide from UDP-MurNAc-pentapeptide onto the lipid carrier undecaprenyl phosphate, yielding undecaprenyl-pyrophosphoryl-MurNAc-pentapeptide, known as lipid I. The polypeptide is Phospho-N-acetylmuramoyl-pentapeptide-transferase (Campylobacter jejuni subsp. jejuni serotype O:6 (strain 81116 / NCTC 11828)).